The sequence spans 340 residues: 7,8-didemethyl-8-hydroxy-5-deazariboflavin synthase (340 aa).

The Radical SAM core domain occupies 25-256 (ATYSPAYTIV…SDITIQIPPN (232 aa)). 3 residues coordinate [4Fe-4S] cluster: Cys39, Cys43, and Cys46.

It belongs to the radical SAM superfamily. CofG family. In terms of assembly, consists of two subunits, CofG and CofH. [4Fe-4S] cluster serves as cofactor.

It carries out the reaction 5-amino-5-(4-hydroxybenzyl)-6-(D-ribitylimino)-5,6-dihydrouracil + S-adenosyl-L-methionine = 7,8-didemethyl-8-hydroxy-5-deazariboflavin + 5'-deoxyadenosine + L-methionine + NH4(+) + H(+). The protein operates within cofactor biosynthesis; coenzyme F0 biosynthesis. Catalyzes the radical-mediated synthesis of 7,8-didemethyl-8-hydroxy-5-deazariboflavin from 5-amino-5-(4-hydroxybenzyl)-6-(D-ribitylimino)-5,6-dihydrouracil. In Trichormus variabilis (strain ATCC 29413 / PCC 7937) (Anabaena variabilis), this protein is 7,8-didemethyl-8-hydroxy-5-deazariboflavin synthase.